Reading from the N-terminus, the 191-residue chain is Phosphoheptose isomerase (191 aa).

Residues 34 to 191 (IATALKDGNK…LVEEMVCERS (158 aa)) form the SIS domain. 49-51 (NGG) is a substrate binding site. Histidine 58 and glutamate 62 together coordinate Zn(2+). Substrate is bound by residues glutamate 62, 91–92 (ND), 117–119 (TTS), serine 122, and glutamine 169. The Zn(2+) site is built by glutamine 169 and histidine 177.

The protein belongs to the SIS family. GmhA subfamily. It depends on Zn(2+) as a cofactor.

Its subcellular location is the cytoplasm. It carries out the reaction 2 D-sedoheptulose 7-phosphate = D-glycero-alpha-D-manno-heptose 7-phosphate + D-glycero-beta-D-manno-heptose 7-phosphate. Its pathway is carbohydrate biosynthesis; D-glycero-D-manno-heptose 7-phosphate biosynthesis; D-glycero-alpha-D-manno-heptose 7-phosphate and D-glycero-beta-D-manno-heptose 7-phosphate from sedoheptulose 7-phosphate: step 1/1. Catalyzes the isomerization of sedoheptulose 7-phosphate in D-glycero-D-manno-heptose 7-phosphate. The polypeptide is Phosphoheptose isomerase (Aquifex aeolicus (strain VF5)).